The chain runs to 290 residues: Ribosomal RNA small subunit methyltransferase A (290 aa).

S-adenosyl-L-methionine contacts are provided by N27, L29, G54, E75, D100, and N125.

The protein belongs to the class I-like SAM-binding methyltransferase superfamily. rRNA adenine N(6)-methyltransferase family. RsmA subfamily.

The protein resides in the cytoplasm. The enzyme catalyses adenosine(1518)/adenosine(1519) in 16S rRNA + 4 S-adenosyl-L-methionine = N(6)-dimethyladenosine(1518)/N(6)-dimethyladenosine(1519) in 16S rRNA + 4 S-adenosyl-L-homocysteine + 4 H(+). In terms of biological role, specifically dimethylates two adjacent adenosines (A1518 and A1519) in the loop of a conserved hairpin near the 3'-end of 16S rRNA in the 30S particle. May play a critical role in biogenesis of 30S subunits. In Streptococcus pyogenes serotype M5 (strain Manfredo), this protein is Ribosomal RNA small subunit methyltransferase A.